A 109-amino-acid polypeptide reads, in one-letter code: Class I hydrophobin G (109 aa).

The signal sequence occupies residues Met1–Ala19. 4 disulfides stabilise this stretch: Cys36-Cys90, Cys42-Cys84, Cys43-Cys76, and Cys91-Cys105.

The protein belongs to the fungal hydrophobin family.

The protein localises to the secreted. It is found in the cell wall. Aerial growth, conidiation, and dispersal of filamentous fungi in the environment rely upon a capability of their secreting small amphipathic proteins called hydrophobins (HPBs) with low sequence identity. Class I can self-assemble into an outermost layer of rodlet bundles on aerial cell surfaces, conferring cellular hydrophobicity that supports fungal growth, development and dispersal; whereas Class II form highly ordered films at water-air interfaces through intermolecular interactions but contribute nothing to the rodlet structure. In P.expansum, hydrophobins contribute to germination, tolerance to cold stress and mycotoxins patulin and citrinin production. The protein is Class I hydrophobin G of Penicillium expansum (Blue mold rot fungus).